The chain runs to 218 residues: Glutathione S-transferase Mu 1 (218 aa).

A GST N-terminal domain is found at 2–88; it reads PMILGYWNVR…YLARKHHLDG (87 aa). 7–8 contributes to the glutathione binding site; sequence YW. T34 bears the Phosphothreonine mark. Residues 43 to 46, K50, and 59 to 60 contribute to the glutathione site; these read RSQW and NL. S67 bears the Phosphoserine mark. Position 72-73 (72-73) interacts with glutathione; the sequence is QS. One can recognise a GST C-terminal domain in the interval 90 to 208; sequence TEEERIRADI…KSSRYIATPI (119 aa). Residue Y116 coordinates substrate. S210 is subject to Phosphoserine.

In terms of assembly, homodimer.

Its subcellular location is the cytoplasm. It catalyses the reaction RX + glutathione = an S-substituted glutathione + a halide anion + H(+). It carries out the reaction prostaglandin A2 + glutathione = prostaglandin A2-S-(R)-glutathione. The catalysed reaction is prostaglandin J2 + glutathione = prostaglandin J2-S-(R)-glutathione. The enzyme catalyses prostaglandin J2 + glutathione = prostaglandin J2-S-(S)-glutathione. It catalyses the reaction prostaglandin A2 + glutathione = prostaglandin A2-S-(S)-glutathione. It carries out the reaction 11(S)-hydroxy-14(S),15(S)-epoxy-(5Z,8Z,12E)-eicosatrienoate + glutathione = (11S,15S)-dihydroxy-14(R)-S-glutathionyl-(5Z,8Z,12E)-eicosatrienoate. Its function is as follows. Conjugation of reduced glutathione to a wide number of exogenous and endogenous hydrophobic electrophiles. Involved in the formation of glutathione conjugates of both prostaglandin A2 (PGA2) and prostaglandin J2 (PGJ2). Participates in the formation of novel hepoxilin regioisomers. In Mus musculus (Mouse), this protein is Glutathione S-transferase Mu 1.